Reading from the N-terminus, the 103-residue chain is Toxin BMLCL (103 aa).

A signal peptide spans 1-21 (MKTLLLTLVVVTIICLDLGYT). 5 disulfide bridges follow: Cys-24–Cys-45, Cys-27–Cys-37, Cys-38–Cys-72, Cys-76–Cys-90, and Cys-91–Cys-96.

The protein belongs to the three-finger toxin family. Ancestral subfamily. Orphan group XVII sub-subfamily. Expressed by the venom gland.

It localises to the secreted. Functionally, interacts with high efficiency with both neuronal alpha-7/CHRNA7 and muscle type nicotinic acetylcholine receptors (nAChRs). Tested on human alpha-7/CHRNA7 nAChR (IC(50)=42 nM), T.californica muscle receptor (IC(50)=31 nM), L.stagnalis and A.californica acetylcholine-binding proteins (IC(50)=333 nM and 3.4 uM, respectively). In Bungarus multicinctus (Many-banded krait), this protein is Toxin BMLCL.